A 165-amino-acid chain; its full sequence is Large ribosomal subunit protein uL15 (165 aa).

The tract at residues 1 to 44 is disordered; it reads MSLNQLKAPRGANRAKKRVGRGQGSGLGKTAGRGGKGQKARSGN. Gly residues predominate over residues 21–37; the sequence is RGQGSGLGKTAGRGGKG.

Belongs to the universal ribosomal protein uL15 family. In terms of assembly, part of the 50S ribosomal subunit.

Binds to the 23S rRNA. The protein is Large ribosomal subunit protein uL15 of Anaeromyxobacter dehalogenans (strain 2CP-C).